Here is a 397-residue protein sequence, read N- to C-terminus: Elongation factor Tu (397 aa).

Residues 10-207 enclose the tr-type G domain; the sequence is KPHVNIGTIG…AVDESIPEPV (198 aa). The interval 19–26 is G1; sequence GHVDHGKT. 19–26 is a binding site for GTP; that stretch reads GHVDHGKT. A Mg(2+)-binding site is contributed by Thr26. Positions 63 to 67 are G2; sequence GITIN. Residues 84-87 are G3; that stretch reads DAPG. Residues 84–88 and 139–142 each bind GTP; these read DAPGH and NKSD. Residues 139 to 142 form a G4 region; it reads NKSD. Residues 177–179 form a G5 region; that stretch reads SGL.

This sequence belongs to the TRAFAC class translation factor GTPase superfamily. Classic translation factor GTPase family. EF-Tu/EF-1A subfamily. Monomer.

The protein localises to the cytoplasm. The enzyme catalyses GTP + H2O = GDP + phosphate + H(+). Its function is as follows. GTP hydrolase that promotes the GTP-dependent binding of aminoacyl-tRNA to the A-site of ribosomes during protein biosynthesis. In Clavibacter sepedonicus (Clavibacter michiganensis subsp. sepedonicus), this protein is Elongation factor Tu.